Here is a 374-residue protein sequence, read N- to C-terminus: Flap endonuclease 1 (374 aa).

The interval 1–105 (MGIKGLTALI…ELLQKRFGRR (105 aa)) is N-domain. Aspartate 34 is a binding site for Mg(2+). 2 residues coordinate DNA: arginine 47 and arginine 71. Position 87 (aspartate 87) interacts with Mg(2+). Residues 103–122 (GRREEAREQEEEQKDVADAE) form a disordered region. The tract at residues 123–254 (KMDQLARRQV…KTALKLIREH (132 aa)) is I-domain. Residues glutamate 159, glutamate 161, aspartate 180, and aspartate 182 each contribute to the Mg(2+) site. Residue glutamate 159 participates in DNA binding. The DNA site is built by glycine 232 and aspartate 234. Aspartate 234 lines the Mg(2+) pocket. The tract at residues 335–374 (SLSQKQQGRLDGFFTVKPGSAPPKRKAEDDKKNVKKKGKK) is disordered. The segment at 340-348 (QQGRLDGFF) is interaction with PCNA.

It belongs to the XPG/RAD2 endonuclease family. FEN1 subfamily. In terms of assembly, interacts with PCNA. Three molecules of FEN1 bind to one PCNA trimer with each molecule binding to one PCNA monomer. PCNA stimulates the nuclease activity without altering cleavage specificity. The cofactor is Mg(2+). In terms of processing, phosphorylated. Phosphorylation upon DNA damage induces relocalization to the nuclear plasma.

The protein resides in the nucleus. Its subcellular location is the nucleolus. It localises to the nucleoplasm. The protein localises to the mitochondrion. Structure-specific nuclease with 5'-flap endonuclease and 5'-3' exonuclease activities involved in DNA replication and repair. During DNA replication, cleaves the 5'-overhanging flap structure that is generated by displacement synthesis when DNA polymerase encounters the 5'-end of a downstream Okazaki fragment. It enters the flap from the 5'-end and then tracks to cleave the flap base, leaving a nick for ligation. Also involved in the long patch base excision repair (LP-BER) pathway, by cleaving within the apurinic/apyrimidinic (AP) site-terminated flap. Acts as a genome stabilization factor that prevents flaps from equilibrating into structures that lead to duplications and deletions. Also possesses 5'-3' exonuclease activity on nicked or gapped double-stranded DNA, and exhibits RNase H activity. Also involved in replication and repair of rDNA and in repairing mitochondrial DNA. The chain is Flap endonuclease 1 from Mycosarcoma maydis (Corn smut fungus).